The following is a 374-amino-acid chain: Guanine nucleotide-binding protein subunit alpha-15 (374 aa).

One can recognise a G-alpha domain in the interval 41–374 (GELKLLLLGP…ARYLDEINLL (334 aa)). The interval 44–57 (KLLLLGPGESGKST) is G1 motif. Residues 49 to 56 (GPGESGKS), 183 to 189 (LRSRMPT), 208 to 212 (DAGGQ), 277 to 280 (NKTD), and alanine 346 contribute to the GTP site. Serine 56 and threonine 189 together coordinate Mg(2+). The interval 181 to 189 (DVLRSRMPT) is G2 motif. Positions 204-213 (LRIVDAGGQK) are G3 motif. The G4 motif stretch occupies residues 273–280 (ILFLNKTD). A G5 motif region spans residues 344–349 (TCATDT).

Belongs to the G-alpha family. G(q) subfamily. In terms of assembly, g proteins are composed of 3 units; alpha, beta and gamma. The alpha chain contains the guanine nucleotide binding site.

Functionally, guanine nucleotide-binding proteins (G proteins) are involved as modulators or transducers in various transmembrane signaling systems. This chain is Guanine nucleotide-binding protein subunit alpha-15 (Gna15), found in Rattus norvegicus (Rat).